A 289-amino-acid chain; its full sequence is G1/S-specific cyclin-D2 (289 aa).

The Cyclin N-terminal domain maps to 26 to 151 (LQNLLTIEER…VLGKLKWNLA (126 aa)). Residues 264–289 (QHNAGSKSVEDPDQATTPTDVRDVDL) are disordered. Residue S271 is modified to Phosphoserine. T280 carries the phosphothreonine modification.

Belongs to the cyclin family. Cyclin D subfamily. As to quaternary structure, interacts with either CDK4 or CDK6 protein kinase to form a serine/threonine kinase holoenzyme complex. The cyclin subunit imparts substrate specificity to the complex. Phosphorylation at Thr-280 by MAP kinases is required for ubiquitination and degradation by the DCX(AMBRA1) complex. Post-translationally, ubiquitinated by the DCX(AMBRA1) complex during the transition from G1 to S cell phase, leading to its degradation: ubiquitination is dependent on Thr-280 phosphorylation. The DCX(AMBRA1) complex represents the major regulator of CCND2 stability during the G1/S transition. Polyubiquitinated by the SCF(FBXL2) complex, leading to proteasomal degradation.

Its subcellular location is the nucleus. The protein resides in the cytoplasm. It is found in the nucleus membrane. Functionally, regulatory component of the cyclin D2-CDK4 (DC) complex that phosphorylates and inhibits members of the retinoblastoma (RB) protein family including RB1 and regulates the cell-cycle during G(1)/S transition. Phosphorylation of RB1 allows dissociation of the transcription factor E2F from the RB/E2F complex and the subsequent transcription of E2F target genes which are responsible for the progression through the G(1) phase. Hypophosphorylates RB1 in early G(1) phase. Cyclin D-CDK4 complexes are major integrators of various mitogenenic and antimitogenic signals. This Mus musculus (Mouse) protein is G1/S-specific cyclin-D2.